We begin with the raw amino-acid sequence, 235 residues long: Flagellar L-ring protein (235 aa).

The signal sequence occupies residues 1–18 (MNKIAGTLFLLAGLAMAG). Residue Cys-19 is the site of N-palmitoyl cysteine attachment. Cys-19 carries the S-diacylglycerol cysteine lipid modification.

Belongs to the FlgH family. As to quaternary structure, the basal body constitutes a major portion of the flagellar organelle and consists of four rings (L,P,S, and M) mounted on a central rod.

The protein localises to the cell outer membrane. Its subcellular location is the bacterial flagellum basal body. Assembles around the rod to form the L-ring and probably protects the motor/basal body from shearing forces during rotation. In Chelativorans sp. (strain BNC1), this protein is Flagellar L-ring protein.